A 154-amino-acid chain; its full sequence is SsrA-binding protein (154 aa).

The tract at residues Lys135–Arg154 is disordered.

The protein belongs to the SmpB family.

Its subcellular location is the cytoplasm. Required for rescue of stalled ribosomes mediated by trans-translation. Binds to transfer-messenger RNA (tmRNA), required for stable association of tmRNA with ribosomes. tmRNA and SmpB together mimic tRNA shape, replacing the anticodon stem-loop with SmpB. tmRNA is encoded by the ssrA gene; the 2 termini fold to resemble tRNA(Ala) and it encodes a 'tag peptide', a short internal open reading frame. During trans-translation Ala-aminoacylated tmRNA acts like a tRNA, entering the A-site of stalled ribosomes, displacing the stalled mRNA. The ribosome then switches to translate the ORF on the tmRNA; the nascent peptide is terminated with the 'tag peptide' encoded by the tmRNA and targeted for degradation. The ribosome is freed to recommence translation, which seems to be the essential function of trans-translation. In Microcystis aeruginosa (strain NIES-843 / IAM M-2473), this protein is SsrA-binding protein.